The primary structure comprises 156 residues: Endoribonuclease YbeY (156 aa).

Positions 117, 121, and 127 each coordinate Zn(2+).

This sequence belongs to the endoribonuclease YbeY family. Zn(2+) serves as cofactor.

The protein localises to the cytoplasm. Functionally, single strand-specific metallo-endoribonuclease involved in late-stage 70S ribosome quality control and in maturation of the 3' terminus of the 16S rRNA. This chain is Endoribonuclease YbeY, found in Shewanella frigidimarina (strain NCIMB 400).